The sequence spans 319 residues: 4-diphosphocytidyl-2-C-methyl-D-erythritol kinase (319 aa).

Residue Lys21 is part of the active site. Residue 106 to 116 (PIGAGLAGGSS) coordinates ATP. Residue Asp148 is part of the active site.

This sequence belongs to the GHMP kinase family. IspE subfamily.

It catalyses the reaction 4-CDP-2-C-methyl-D-erythritol + ATP = 4-CDP-2-C-methyl-D-erythritol 2-phosphate + ADP + H(+). It functions in the pathway isoprenoid biosynthesis; isopentenyl diphosphate biosynthesis via DXP pathway; isopentenyl diphosphate from 1-deoxy-D-xylulose 5-phosphate: step 3/6. In terms of biological role, catalyzes the phosphorylation of the position 2 hydroxy group of 4-diphosphocytidyl-2C-methyl-D-erythritol. This Prochlorococcus marinus (strain SARG / CCMP1375 / SS120) protein is 4-diphosphocytidyl-2-C-methyl-D-erythritol kinase.